The primary structure comprises 160 residues: MESISSMIYLVAMMSLIIGGSQAIPYRPSAYLYNQQYCMDTLTGRQLYIGEVFTREDQCVRIQCLETLQLWEDSCQVPKLTQGNCTPVPSTNPHAEYPRCCPLYECKSYESNSGGTLEQTNIYDHYGTLRSSHLTEMIVIDGRTPPRGEIHTASARKYQV.

The first 23 residues, 1 to 23 (MESISSMIYLVAMMSLIIGGSQA), serve as a signal peptide directing secretion.

Expressed in fat body.

The protein localises to the secreted. Its function is as follows. Probably involved in the antiviral immune response. May have a role in controlling viral load in the adult fat body, after infection with viruses such as the Drosophila C virus. The chain is Protein Vago from Drosophila melanogaster (Fruit fly).